Here is a 187-residue protein sequence, read N- to C-terminus: Ribosome maturation factor RimM (187 aa).

Residues 96 to 169 form the PRC barrel domain; sequence EDEFFYADLE…KLVIDPTAAG (74 aa).

The protein belongs to the RimM family. Binds ribosomal protein uS19.

The protein resides in the cytoplasm. Its function is as follows. An accessory protein needed during the final step in the assembly of 30S ribosomal subunit, possibly for assembly of the head region. Essential for efficient processing of 16S rRNA. May be needed both before and after RbfA during the maturation of 16S rRNA. It has affinity for free ribosomal 30S subunits but not for 70S ribosomes. The protein is Ribosome maturation factor RimM of Rhizobium meliloti (strain 1021) (Ensifer meliloti).